A 549-amino-acid polypeptide reads, in one-letter code: Hydroxylamine reductase (549 aa).

Residues Cys5, Cys8, Cys17, and Cys23 each contribute to the [4Fe-4S] cluster site. Hybrid [4Fe-2O-2S] cluster contacts are provided by His243, Glu267, Cys311, Cys403, Cys431, Cys456, Glu491, and Lys493. The residue at position 403 (Cys403) is a Cysteine persulfide.

Belongs to the HCP family. It depends on [4Fe-4S] cluster as a cofactor. Hybrid [4Fe-2O-2S] cluster serves as cofactor.

Its subcellular location is the cytoplasm. It catalyses the reaction A + NH4(+) + H2O = hydroxylamine + AH2 + H(+). In terms of biological role, catalyzes the reduction of hydroxylamine to form NH(3) and H(2)O. The sequence is that of Hydroxylamine reductase from Desulfitobacterium hafniense (strain DSM 10664 / DCB-2).